The following is a 529-amino-acid chain: Bifunctional purine biosynthesis protein PurH (529 aa).

The region spanning 1–148 (MQQRRSVRRA…KNHKDVAIVV (148 aa)) is the MGS-like domain.

Belongs to the PurH family.

It carries out the reaction (6R)-10-formyltetrahydrofolate + 5-amino-1-(5-phospho-beta-D-ribosyl)imidazole-4-carboxamide = 5-formamido-1-(5-phospho-D-ribosyl)imidazole-4-carboxamide + (6S)-5,6,7,8-tetrahydrofolate. It catalyses the reaction IMP + H2O = 5-formamido-1-(5-phospho-D-ribosyl)imidazole-4-carboxamide. The protein operates within purine metabolism; IMP biosynthesis via de novo pathway; 5-formamido-1-(5-phospho-D-ribosyl)imidazole-4-carboxamide from 5-amino-1-(5-phospho-D-ribosyl)imidazole-4-carboxamide (10-formyl THF route): step 1/1. Its pathway is purine metabolism; IMP biosynthesis via de novo pathway; IMP from 5-formamido-1-(5-phospho-D-ribosyl)imidazole-4-carboxamide: step 1/1. The sequence is that of Bifunctional purine biosynthesis protein PurH from Salmonella arizonae (strain ATCC BAA-731 / CDC346-86 / RSK2980).